A 159-amino-acid polypeptide reads, in one-letter code: Putative ribosomal RNA large subunit methyltransferase H (159 aa).

S-adenosyl-L-methionine-binding positions include leucine 76, glycine 108, and 127–132 (FSKMTF).

It belongs to the RNA methyltransferase RlmH family.

The protein resides in the cytoplasm. The enzyme catalyses pseudouridine(1915) in 23S rRNA + S-adenosyl-L-methionine = N(3)-methylpseudouridine(1915) in 23S rRNA + S-adenosyl-L-homocysteine + H(+). In terms of biological role, specifically methylates the pseudouridine at position 1915 (m3Psi1915) in 23S rRNA. In Methanococcus maripaludis (strain C5 / ATCC BAA-1333), this protein is Putative ribosomal RNA large subunit methyltransferase H.